The primary structure comprises 150 residues: Snaclec bothrojaracin subunit beta (150 aa).

An N-terminal signal peptide occupies residues 1–23 (MGRFIFVSFGLLVVFLSLSGTAA). 3 disulfide bridges follow: Cys-25/Cys-36, Cys-53/Cys-146, and Cys-123/Cys-138. The region spanning 32–147 (YEGSCYRVFE…CTKLEYFVCE (116 aa)) is the C-type lectin domain.

Belongs to the snaclec family. In terms of assembly, heterodimer of subunits alpha and beta; disulfide-linked. As to expression, expressed by the venom gland.

The protein resides in the secreted. In terms of biological role, this potent antithrombotic agent acts in a calcium-independent manner. Exerts its anticoagulant effect by two distinct mechanisms. It binds to activated thrombin through exosite 1, blocking fibrinogen clotting, platelet activation, factor V activation and other effects, and it interacts with prothrombin (F2), decreasing its proteolytic activation -especially in the presence of factor Va. In vivo, intravenous injection before thrombosis induction causes a significant decrease in thrombus weight. Furthermore, BJC shows a prolonged effect by remaining in the plasma bound to prothrombin for at least 12 hours. The polypeptide is Snaclec bothrojaracin subunit beta (Bothrops jararaca (Jararaca)).